The primary structure comprises 138 residues: MLGYFESILPYTNGGKLPYWLLFISVVSIFNSVQTYQNINLTKRVYEKNPNQVSPLSARTFGTWTLITSIVRFYGAYYLQNKQIYELTQFTFAIAAWHFLSEWLYFGTCKLGKGLSGPLIVSSVSLVWMYLQKDFYVN.

A helical transmembrane segment spans residues 17–33 (LPYWLLFISVVSIFNSV). Asn40 carries an N-linked (GlcNAc...) asparagine glycan. 3 helical membrane passes run 56–75 (LSAR…RFYG), 87–107 (LTQF…LYFG), and 114–131 (GLSG…WMYL).

It belongs to the ERG28 family. As to quaternary structure, heterotetramer of ERG25, ERG26, ERG27 and ERG28. ERG28 acts as a scaffold to tether ERG27 and other 4,4-demethylation-related enzymes, forming a demethylation enzyme complex, in the endoplasmic reticulum. Interacts with ERG25, ERG26 and ERG27. Also interacts with ERG1, ERG3, ERG5, ERG6 and ERG11.

It localises to the endoplasmic reticulum membrane. In terms of biological role, part of the third module of ergosterol biosynthesis pathway that includes the late steps of the pathway. ERG28 has a role as a scaffold to help anchor the catalytic components of the C-4 demethylation complex ERG25, ERG26 and ERG27 to the endoplasmic reticulum. The third module or late pathway involves the ergosterol synthesis itself through consecutive reactions that mainly occur in the endoplasmic reticulum (ER) membrane. Firstly, the squalene synthase ERG9 catalyzes the condensation of 2 farnesyl pyrophosphate moieties to form squalene, which is the precursor of all steroids. Squalene synthase is crucial for balancing the incorporation of farnesyl diphosphate (FPP) into sterol and nonsterol isoprene synthesis. Secondly, the squalene epoxidase ERG1 catalyzes the stereospecific oxidation of squalene to (S)-2,3-epoxysqualene, which is considered to be a rate-limiting enzyme in steroid biosynthesis. Then, the lanosterol synthase ERG7 catalyzes the cyclization of (S)-2,3 oxidosqualene to lanosterol, a reaction that forms the sterol core. In the next steps, lanosterol is transformed to zymosterol through a complex process involving various demethylation, reduction and desaturation reactions. The lanosterol 14-alpha-demethylase ERG11 (also known as CYP51) catalyzes C14-demethylation of lanosterol to produce 4,4'-dimethyl cholesta-8,14,24-triene-3-beta-ol, which is critical for ergosterol biosynthesis. The C-14 reductase ERG24 reduces the C14=C15 double bond of 4,4-dimethyl-cholesta-8,14,24-trienol to produce 4,4-dimethyl-cholesta-8,24-dienol. 4,4-dimethyl-cholesta-8,24-dienol is substrate of the C-4 demethylation complex ERG25-ERG26-ERG27 in which ERG25 catalyzes the three-step monooxygenation required for the demethylation of 4,4-dimethyl and 4alpha-methylsterols, ERG26 catalyzes the oxidative decarboxylation that results in a reduction of the 3-beta-hydroxy group at the C-3 carbon to an oxo group, and ERG27 is responsible for the reduction of the keto group on the C-3. ERG28 has a role as a scaffold to help anchor ERG25, ERG26 and ERG27 to the endoplasmic reticulum and ERG29 regulates the activity of the iron-containing C4-methylsterol oxidase ERG25. Then, the sterol 24-C-methyltransferase ERG6 catalyzes the methyl transfer from S-adenosyl-methionine to the C-24 of zymosterol to form fecosterol. The C-8 sterol isomerase ERG2 catalyzes the reaction which results in unsaturation at C-7 in the B ring of sterols and thus converts fecosterol to episterol. The sterol-C5-desaturase ERG3 then catalyzes the introduction of a C-5 double bond in the B ring to produce 5-dehydroepisterol. The C-22 sterol desaturase ERG5 further converts 5-dehydroepisterol into ergosta-5,7,22,24(28)-tetraen-3beta-ol by forming the C-22(23) double bond in the sterol side chain. Finally, ergosta-5,7,22,24(28)-tetraen-3beta-ol is substrate of the C-24(28) sterol reductase ERG4 to produce ergosterol. This chain is Ergosterol biosynthetic protein 28, found in Candida albicans (strain SC5314 / ATCC MYA-2876) (Yeast).